We begin with the raw amino-acid sequence, 513 residues long: Cytochrome P450 4d10 (513 aa).

2 residues coordinate heme: Glu-317 and Cys-457.

Belongs to the cytochrome P450 family. The cofactor is heme.

The protein localises to the endoplasmic reticulum membrane. It localises to the microsome membrane. Its function is as follows. May play an important role in the maintenance of specific insect-host plant relationships. May be involved in xenobiotic metabolism. The chain is Cytochrome P450 4d10 (Cyp4d10) from Drosophila mettleri (Fruit fly).